The chain runs to 360 residues: Lipid-A-disaccharide synthase (360 aa).

It belongs to the LpxB family.

It catalyses the reaction a lipid X + a UDP-2-N,3-O-bis[(3R)-3-hydroxyacyl]-alpha-D-glucosamine = a lipid A disaccharide + UDP + H(+). It functions in the pathway bacterial outer membrane biogenesis; LPS lipid A biosynthesis. Its function is as follows. Condensation of UDP-2,3-diacylglucosamine and 2,3-diacylglucosamine-1-phosphate to form lipid A disaccharide, a precursor of lipid A, a phosphorylated glycolipid that anchors the lipopolysaccharide to the outer membrane of the cell. The chain is Lipid-A-disaccharide synthase from Helicobacter pylori (strain G27).